The following is a 234-amino-acid chain: Sugar fermentation stimulation protein homolog (234 aa).

It belongs to the SfsA family.

In Shewanella loihica (strain ATCC BAA-1088 / PV-4), this protein is Sugar fermentation stimulation protein homolog.